Here is a 632-residue protein sequence, read N- to C-terminus: DNA polymerase eta (632 aa).

The UmuC domain maps to 26-309 (IAHIDMNAFF…FEITSFWTLG (284 aa)). Asp30 and Asp155 together coordinate Mg(2+). The UBZ3-type zinc finger occupies 545-580 (EKTPKLECCKYQVTFTDQKALQEHADYHLALKLSEG). Residues Cys552, Cys553, His568, and His572 each coordinate Zn(2+). Residues 598 to 632 (LLFSRKRPNSQHTATPQKKQVTSSKNILSFFTRKK) form a disordered region. Residues 607–626 (SQHTATPQKKQVTSSKNILS) are compositionally biased toward polar residues. A POL30-binding region spans residues 625–632 (LSFFTRKK).

This sequence belongs to the DNA polymerase type-Y family. Interacts with POL30. This interaction is essential for the polymerase eta function.

It is found in the nucleus. The enzyme catalyses DNA(n) + a 2'-deoxyribonucleoside 5'-triphosphate = DNA(n+1) + diphosphate. Its function is as follows. DNA polymerase specifically involved in DNA repair. Plays an important role in translesion synthesis, where the normal high fidelity DNA polymerases cannot proceed and DNA synthesis stalls. Plays an important role in the repair of UV-induced pyrimidine dimers. Depending on the context, it inserts the correct base, but causes frequent base transitions and transversions. Efficiently incorporates nucleotides opposite to other UV or oxidative DNA damages like O(6)-methylguanine, 7,8-dihydro-8-oxoguanine, 2,6-diamino-4-hydroxy-5-formamidopyrimidine of 2'-deoxyguanosine (FaPydG), or p-benzoquinone DNA adducts. The sequence is that of DNA polymerase eta (RAD30) from Saccharomyces cerevisiae (strain ATCC 204508 / S288c) (Baker's yeast).